A 245-amino-acid chain; its full sequence is rRNA adenine N-6-methyltransferase (245 aa).

Residues asparagine 10, leucine 12, glycine 37, glutamate 58, aspartate 83, and asparagine 100 each contribute to the S-adenosyl-L-methionine site.

It belongs to the class I-like SAM-binding methyltransferase superfamily. rRNA adenine N(6)-methyltransferase family.

The catalysed reaction is adenosine(2085) in 23S rRNA + 2 S-adenosyl-L-methionine = N(6)-dimethyladenosine(2085) in 23S rRNA + 2 S-adenosyl-L-homocysteine + 2 H(+). Its function is as follows. This protein produces a dimethylation of the adenine residue at position 2085 in 23S rRNA, resulting in reduced affinity between ribosomes and macrolide-lincosamide-streptogramin B antibiotics. The protein is rRNA adenine N-6-methyltransferase (ermB) of Enterococcus faecalis (strain ATCC 700802 / V583).